Reading from the N-terminus, the 253-residue chain is Glucosamine-6-phosphate deaminase (253 aa).

The active-site Proton acceptor; for enolization step is aspartate 65. Residue asparagine 133 is the For ring-opening step of the active site. Histidine 135 functions as the Proton acceptor; for ring-opening step in the catalytic mechanism. The For ring-opening step role is filled by glutamate 140.

This sequence belongs to the glucosamine/galactosamine-6-phosphate isomerase family. NagB subfamily.

It carries out the reaction alpha-D-glucosamine 6-phosphate + H2O = beta-D-fructose 6-phosphate + NH4(+). It participates in amino-sugar metabolism; N-acetylneuraminate degradation; D-fructose 6-phosphate from N-acetylneuraminate: step 5/5. Functionally, catalyzes the reversible isomerization-deamination of glucosamine 6-phosphate (GlcN6P) to form fructose 6-phosphate (Fru6P) and ammonium ion. The chain is Glucosamine-6-phosphate deaminase from Corynebacterium glutamicum (strain R).